Reading from the N-terminus, the 155-residue chain is Small ribosomal subunit protein uS7cz/uS7cy (155 aa).

This sequence belongs to the universal ribosomal protein uS7 family. In terms of assembly, part of the 30S ribosomal subunit.

The protein resides in the plastid. Its subcellular location is the chloroplast. One of the primary rRNA binding proteins, it binds directly to 16S rRNA where it nucleates assembly of the head domain of the 30S subunit. The chain is Small ribosomal subunit protein uS7cz/uS7cy (rps7-A) from Angiopteris evecta (Mule's foot fern).